An 837-amino-acid chain; its full sequence is MFLWLFLIVSALISSTNADSDISVEICNVCSCVSVENVLYVNCEKVSVYRPNQLKPPWSNFYHLNFQNNFLNILYPNTFVNFSHAVSLHLGNNKLQNIEGGAFLGLSALKQLHLNNNELKILRADTFLGIENLEYLQADYNLIKYIERGAFNKLHKLKVLILNDNLISFLPDNIFRFASLTHLDIRGNRIQKLPYIGVLEHIGRVVELQLEDNPWNCSCDLLPLKAWLENMPYNIYIGEAICETPSDLYGRLLKETNKQELCPMGTGSDFDVRILPPSQQENGFTTPNGHTTQTTLHRLVTKPPKTTNPSKISGIVAGKALSNRNLSQIVSYQTRVPPLTPCPVPCFCKTHPSDLGLSVNCQEKNIQSMSELTPKPLNAKKLHVNGNNIKDVDISDFTEFEGLDLLHLGSNQITLIKGEVFHNLTNLRRLYLNGNQIERLYPEIFSGLHNLQYLYLEYNLIKEILAGTFDSMPNLQLLYLNNNLLKSLPVYIFSGAPLARLNLRNNKFMYLPVSGVLDQLQSLTQIDLEGNPWDCTCDLVALKLWLEKLNDGIVVKELKCETPVQFANIELKSLKNEILCPKLLNKPSATFTSPAPAITFTTPLGPIRSPPGGPVPLSILILSILVVLILTVFVAFCLLVFVLRRNKKPTVKHEGLGNSECGSMQLQLRKHDHKTNKKDGLSTEAFIPQTIEQMSKSHTCGLKESETGFMFSDPPGQKVMMRNAADKDKDLLHVDTRKRLSTIDELDELFPSRDSNVFIQNFLESKKEYNSIGVSGFEIRYPEKQQDKKNKKSLIGGNHSKIVVEQRKSEYFELKAKLQSSPDYLQVLEEQTALNKI.

The signal sequence occupies residues Met1–Ala18. Topologically, residues Asp19–Ser618 are extracellular. 6 LRR repeats span residues Asn60–Asn81, His84–Gly105, Ala108–Gly129, Asn132–Lys153, Lys156–Phe177, and Ser179–Glu200. A glycan (N-linked (GlcNAc...) asparagine) is linked at Asn81. The 52-residue stretch at Asn213–Met264 folds into the LRRCT 1 domain. The N-linked (GlcNAc...) asparagine glycan is linked to Asn325. Residues Gln333 to Lys375 form the LRRNT domain. LRR repeat units follow at residues Asn378–Glu399, Gly402–Asn423, Asn426–Gly447, Asn450–Ser471, Asn474–Gly495, and Pro497–Asp518. The N-linked (GlcNAc...) asparagine glycan is linked to Asn423. The LRRCT 2 domain maps to Asn531 to Lys582. A helical transmembrane segment spans residues Ile619–Leu639. Topologically, residues Val640–Ile837 are cytoplasmic.

It belongs to the SLITRK family. Interacts (via LRR 1 and 2 repeats) with PTPRD (via extracellular domain). As to expression, in the adult, significant expression is detected only in the brain. Broadly expressed in embryonic brain with highest expression in subventricular zone, subplate, cortical plate, pyramidal cell layer of hippocampus, thalamus and hypothalamus.

The protein localises to the membrane. It is found in the cell membrane. Functionally, it is involved in synaptogenesis and promotes synapse differentiation. Suppresses neurite outgrowth. The sequence is that of SLIT and NTRK-like protein 4 (Slitrk4) from Mus musculus (Mouse).